Here is a 434-residue protein sequence, read N- to C-terminus: Enolase (434 aa).

Q165 provides a ligand contact to (2R)-2-phosphoglycerate. E207 (proton donor) is an active-site residue. Positions 244, 291, and 318 each coordinate Mg(2+). (2R)-2-phosphoglycerate-binding residues include K343, R372, S373, and K394. Residue K343 is the Proton acceptor of the active site.

The protein belongs to the enolase family. It depends on Mg(2+) as a cofactor.

The protein localises to the cytoplasm. It localises to the secreted. It is found in the cell surface. It catalyses the reaction (2R)-2-phosphoglycerate = phosphoenolpyruvate + H2O. The protein operates within carbohydrate degradation; glycolysis; pyruvate from D-glyceraldehyde 3-phosphate: step 4/5. In terms of biological role, catalyzes the reversible conversion of 2-phosphoglycerate (2-PG) into phosphoenolpyruvate (PEP). It is essential for the degradation of carbohydrates via glycolysis. The protein is Enolase of Staphylococcus epidermidis (strain ATCC 35984 / DSM 28319 / BCRC 17069 / CCUG 31568 / BM 3577 / RP62A).